The primary structure comprises 321 residues: Lipoyl synthase (321 aa).

Positions 1–21 are disordered; sequence MRHRWEDRPVAPPPDGRPTEY. 7 residues coordinate [4Fe-4S] cluster: Cys63, Cys68, Cys74, Cys89, Cys93, Cys96, and Ser302. The 217-residue stretch at 75–291 folds into the Radical SAM core domain; sequence WNNRTATFMI…KKLGLEMGFS (217 aa). Residues 301–321 form a disordered region; the sequence is SSYHAHEQTEDARRGALGARG. Over residues 304-314 the composition is skewed to basic and acidic residues; it reads HAHEQTEDARR.

Belongs to the radical SAM superfamily. Lipoyl synthase family. The cofactor is [4Fe-4S] cluster.

Its subcellular location is the cytoplasm. It catalyses the reaction [[Fe-S] cluster scaffold protein carrying a second [4Fe-4S](2+) cluster] + N(6)-octanoyl-L-lysyl-[protein] + 2 oxidized [2Fe-2S]-[ferredoxin] + 2 S-adenosyl-L-methionine + 4 H(+) = [[Fe-S] cluster scaffold protein] + N(6)-[(R)-dihydrolipoyl]-L-lysyl-[protein] + 4 Fe(3+) + 2 hydrogen sulfide + 2 5'-deoxyadenosine + 2 L-methionine + 2 reduced [2Fe-2S]-[ferredoxin]. It participates in protein modification; protein lipoylation via endogenous pathway; protein N(6)-(lipoyl)lysine from octanoyl-[acyl-carrier-protein]: step 2/2. Its function is as follows. Catalyzes the radical-mediated insertion of two sulfur atoms into the C-6 and C-8 positions of the octanoyl moiety bound to the lipoyl domains of lipoate-dependent enzymes, thereby converting the octanoylated domains into lipoylated derivatives. This Rubrobacter xylanophilus (strain DSM 9941 / JCM 11954 / NBRC 16129 / PRD-1) protein is Lipoyl synthase.